The primary structure comprises 31 residues: Ranatuerin-2Ca (31 aa).

The cysteines at positions 24 and 29 are disulfide-linked.

As to expression, expressed by the skin glands.

The protein localises to the secreted. In terms of biological role, antibacterial activity against Gram-positive bacterium S.aureus and Gram-negative bacterium E.coli. Has activity against C.albicans. The protein is Ranatuerin-2Ca of Lithobates clamitans (Green frog).